The following is a 929-amino-acid chain: Diacylglycerol kinase zeta (929 aa).

Residues 1 to 14 (MEPRDPSPEARSSD) show a composition bias toward basic and acidic residues. Disordered regions lie at residues 1–46 (MEPR…RRFP) and 59–80 (KSGL…GESE). The segment covering 15 to 24 (SESASASSSG) has biased composition (low complexity). Positions 25–37 (SERDADPEPDKAP) are enriched in basic and acidic residues. 2 Phorbol-ester/DAG-type zinc fingers span residues 98-153 (HIWF…NFRC) and 173-231 (HHWV…EEPC). Residues 257-281 (KASKKKKRASFKRRSSKKGPEEGRW) form a disordered region. Positions 258-273 (ASKKKKRASFKRRSSK) are enriched in basic residues. Positions 279-417 (GRWRPFIIRP…HVEEGNVVQL (139 aa)) are mediates interaction with RASGRP1. The 135-residue stretch at 292-426 (PLMKPLLVFV…LDRWDLRAEP (135 aa)) folds into the DAGKc domain. Positions 362 to 370 (LSTLDQLRL) match the Nuclear export signal motif. A disordered region spans residues 421–441 (DLRAEPNPEAGPEERDDGATD). Residue Ser706 is modified to Phosphoserine. The interval 760–783 (ARPDLPTPTSPLPASPCSPTPGSL) is disordered. Pro residues predominate over residues 764-778 (LPTPTSPLPASPCSP). Position 782 is a phosphoserine (Ser782). ANK repeat units follow at residues 823–853 (QSRT…EILD) and 858–887 (NGET…SLMK). A PDZ-binding motif is present at residues 925–929 (QETAV).

This sequence belongs to the eukaryotic diacylglycerol kinase family. Interacts (via PDZ-binding motif) with the PDZ domain of the syntrophin SNTG1 and that of SNX27. Interacts with IRS1 in the absence of insulin; insulin stimulation decreases this interaction. Found in a ternary complex with IRS1 and PIP5K1A in the absence of insulin. Interacts with PIP5K1A. Forms a signaling complex with RASGRP1 and HRAS.

The protein localises to the nucleus. The protein resides in the cytoplasm. It is found in the cytosol. Its subcellular location is the cell membrane. It localises to the cell projection. The protein localises to the lamellipodium. The enzyme catalyses a 1,2-diacyl-sn-glycerol + ATP = a 1,2-diacyl-sn-glycero-3-phosphate + ADP + H(+). It carries out the reaction a 1-O-alkyl-sn-glycerol + ATP = a 1-O-alkyl-sn-glycero-3-phosphate + ADP + H(+). The catalysed reaction is 1-O-alkyl-2-acyl-sn-glycerol + ATP = 1-O-alkyl-2-acyl-sn-glycero-3-phosphate + ADP + H(+). It catalyses the reaction 1,2-didecanoyl-sn-glycerol + ATP = 1,2-didecanoyl-sn-glycero-3-phosphate + ADP + H(+). The enzyme catalyses 1,2-ditetradecanoyl-sn-glycerol + ATP = 1,2-ditetradecanoyl-sn-glycero-3-phosphate + ADP + H(+). It carries out the reaction 1-hexadecanoyl-2-(9Z-octadecenoyl)-sn-glycerol + ATP = 1-hexadecanoyl-2-(9Z-octadecenoyl)-sn-glycero-3-phosphate + ADP + H(+). The catalysed reaction is 1-hexadecanoyl-2-(5Z,8Z,11Z,14Z-eicosatetraenoyl)-sn-glycerol + ATP = 1-hexadecanoyl-2-(5Z,8Z,11Z,14Z-eicosatetraenoyl)-sn-glycero-3-phosphate + ADP + H(+). It catalyses the reaction 1-octadecanoyl-2-(9Z-octadecenoyl)-sn-glycerol + ATP = 1-octadecanoyl-2-(9Z-octadecenoyl)-sn-glycero-3-phosphate + ADP + H(+). The enzyme catalyses 1-octadecanoyl-2-(5Z,8Z,11Z,14Z-eicosatetraenoyl)-sn-glycerol + ATP = 1-octadecanoyl-2-(5Z,8Z,11Z,14Z-eicosatetraenoyl)-sn-glycero-3-phosphate + ADP + H(+). It carries out the reaction 1-octadecanoyl-2-(4Z,7Z,10Z,13Z,16Z,19Z-docosahexaenoyl)-sn-glycerol + ATP = 1-octadecanoyl-2-(4Z,7Z,10Z,13Z,16Z,19Z-docosahexaenoyl)-sn-glycero-3-phosphate + ADP + H(+). The catalysed reaction is 1,2-di-(9Z-octadecenoyl)-sn-glycerol + ATP = 1,2-di-(9Z-octadecenoyl)-sn-glycero-3-phosphate + ADP + H(+). It catalyses the reaction 1-(9Z-octadecenoyl)-2-hexadecanoyl-sn-glycerol + ATP = 1-(9Z)-octadecenoyl-2-hexadecanoyl-sn-glycero-3-phosphate + ADP + H(+). The enzyme catalyses 1-eicosanoyl-2-(5Z,8Z,11Z,14Z)-eicosatetraenoyl-sn-glycerol + ATP = 1-eicosanoyl-2-(5Z,8Z,11Z,14Z)-eicosatetraenoyl-sn-glycero-3-phosphate + ADP + H(+). It carries out the reaction 1,2-di-(5Z,8Z,11Z,14Z)-eicosatetraenoyl-sn-glycerol + ATP = 1,2-di-(5Z,8Z,11Z,14Z)-eicosatetraenoyl-sn-glycero-3-phosphate + ADP + H(+). The catalysed reaction is 1-O-hexadecyl-2-acetyl-sn-glycerol + ATP = 1-O-hexadecyl-2-acetyl-sn-glycero-3-phosphate + ADP + H(+). It catalyses the reaction 1-O-hexadecyl-2-(5Z,8Z,11Z,14Z-eicosatetraenoyl)-sn-glycerol + ATP = 1-O-hexadecyl-2-(5Z,8Z,11Z,14Z-eicosatetraenoyl)-sn-glycero-3-phosphate + ADP + H(+). The enzyme catalyses 1-O-hexadecyl-2-(9Z-octadecenoyl)-sn-glycerol + ATP = 1-O-hexadecyl-2-(9Z-octadecenoyl)-sn-glycero-3-phosphate + ADP + H(+). It carries out the reaction 1-O-hexadecyl-sn-glycerol + ATP = 1-O-hexadecyl-sn-glycero-3-phosphate + ADP + H(+). The protein operates within lipid metabolism; glycerolipid metabolism. Functionally, diacylglycerol kinase that converts diacylglycerol/DAG into phosphatidic acid/phosphatidate/PA and regulates the respective levels of these two bioactive lipids. Thereby, acts as a central switch between the signaling pathways activated by these second messengers with different cellular targets and opposite effects in numerous biological processes. Also plays an important role in the biosynthesis of complex lipids. Does not exhibit an acyl chain-dependent substrate specificity among diacylglycerol species. Can also phosphorylate 1-alkyl-2-acylglycerol in vitro but less efficiently and with a preference for alkylacylglycerols containing an arachidonoyl group. The biological processes it is involved in include T cell activation since it negatively regulates T-cell receptor signaling which is in part mediated by diacylglycerol. By generating phosphatidic acid, stimulates PIP5KIA activity which regulates actin polymerization. Through the same mechanism could also positively regulate insulin-induced translocation of SLC2A4 to the cell membrane. Regulates RASGRP1 activity. The chain is Diacylglycerol kinase zeta from Rattus norvegicus (Rat).